We begin with the raw amino-acid sequence, 186 residues long: ATP synthase subunit delta, chloroplastic (186 aa).

Belongs to the ATPase delta chain family. As to quaternary structure, F-type ATPases have 2 components, F(1) - the catalytic core - and F(0) - the membrane proton channel. F(1) has five subunits: alpha(3), beta(3), gamma(1), delta(1), epsilon(1). CF(0) has four main subunits: a(1), b(1), b'(1) and c(10-14). The alpha and beta chains form an alternating ring which encloses part of the gamma chain. F(1) is attached to F(0) by a central stalk formed by the gamma and epsilon chains, while a peripheral stalk is formed by the delta, b and b' chains.

It localises to the plastid. Its subcellular location is the chloroplast thylakoid membrane. In terms of biological role, f(1)F(0) ATP synthase produces ATP from ADP in the presence of a proton or sodium gradient. F-type ATPases consist of two structural domains, F(1) containing the extramembraneous catalytic core and F(0) containing the membrane proton channel, linked together by a central stalk and a peripheral stalk. During catalysis, ATP synthesis in the catalytic domain of F(1) is coupled via a rotary mechanism of the central stalk subunits to proton translocation. This protein is part of the stalk that links CF(0) to CF(1). It either transmits conformational changes from CF(0) to CF(1) or is implicated in proton conduction. This is ATP synthase subunit delta, chloroplastic from Porphyra purpurea (Red seaweed).